A 3856-amino-acid chain; its full sequence is Serine/threonine-protein kinase ATM (3856 aa).

The region spanning 108 to 162 is the PWWP domain; that stretch reads VGNLVWVMTKYKKWWPGEVVDFKADAKESFMVRSIGQSHLVSWFASSKLKPFKES. The segment at 648-681 is disordered; sequence GIPDLNGTNTEPTLVLPQVEPTQRRRRRKKEESP. The region spanning 2727-3393 is the FAT domain; the sequence is VVAGSAVVCG…ILQLLALANG (667 aa). The Bipartite nuclear localization signal signature appears at 3233–3249; it reads RKHKTKELEVFIKRFKS. In terms of domain architecture, PI3K/PI4K catalytic spans 3499 to 3811; it reads LSDSVTVMNG…GNKDATRALM (313 aa). The tract at residues 3505 to 3511 is G-loop; sequence VMNGINA. The catalytic loop stretch occupies residues 3678–3686; the sequence is GLGDRHAMN. The segment at 3698–3722 is activation loop; that stretch reads HIDLGVAFEQGLMLKTPERVPFRLT. In terms of domain architecture, FATC spans 3824–3856; that stretch reads EMRSIHGQAQQLIQDAIDTDRLSHMFPGWGAWM.

Belongs to the PI3/PI4-kinase family. As to quaternary structure, interacts with RUG3. In terms of tissue distribution, ubiquitously expressed at low levels with slightly higher levels in flower buds.

It localises to the nucleus. The catalysed reaction is L-seryl-[protein] + ATP = O-phospho-L-seryl-[protein] + ADP + H(+). It catalyses the reaction L-threonyl-[protein] + ATP = O-phospho-L-threonyl-[protein] + ADP + H(+). In terms of biological role, serine/threonine protein kinase which activates checkpoint signaling upon genotoxic stresses such as ionizing radiation (IR) or DNA replication stalling. Plays a central role in the perception and response to both stress-induced damage in somatic cells and developmentally programmed DNA damage during meiosis. Recognizes the substrate consensus sequence [ST]-Q. Phosphorylates histone variant H2AX to form H2AXS139ph at double strand breaks (DSBs), thereby regulating DNA damage response mechanism. Involved in transcriptional regulation of RAD51, PARP1, GR1, and LIG4 in response to DNA double strand breaks. Plays a dual role by activating the DNA damage response at dysfunctional telomeres and yet preventing this activation at functional telomeres. Not required for telomere length homeostasis. Regulates DNA damage response (DDR) synergistically with RUG3. Together with RUG3, involved in the splicing of the ND2/NAD2 mRNA. The chain is Serine/threonine-protein kinase ATM from Arabidopsis thaliana (Mouse-ear cress).